The sequence spans 241 residues: Aspartate/glutamate leucyltransferase (241 aa).

The protein belongs to the R-transferase family. Bpt subfamily.

It localises to the cytoplasm. The catalysed reaction is N-terminal L-glutamyl-[protein] + L-leucyl-tRNA(Leu) = N-terminal L-leucyl-L-glutamyl-[protein] + tRNA(Leu) + H(+). It carries out the reaction N-terminal L-aspartyl-[protein] + L-leucyl-tRNA(Leu) = N-terminal L-leucyl-L-aspartyl-[protein] + tRNA(Leu) + H(+). In terms of biological role, functions in the N-end rule pathway of protein degradation where it conjugates Leu from its aminoacyl-tRNA to the N-termini of proteins containing an N-terminal aspartate or glutamate. The protein is Aspartate/glutamate leucyltransferase of Parvibaculum lavamentivorans (strain DS-1 / DSM 13023 / NCIMB 13966).